The chain runs to 209 residues: Isopentenyl-diphosphate Delta-isomerase (209 aa).

2 residues coordinate Mn(2+): H31 and H38. Residues 36-171 (PLHLAFSVYI…RLLVSPWCRA (136 aa)) form the Nudix hydrolase domain. C73 is an active-site residue. C73 is a Mg(2+) binding site. Mn(2+) is bound at residue H75. E93 serves as a coordination point for Mg(2+). Mn(2+) contacts are provided by E120 and E122. Residue E122 is part of the active site.

The protein belongs to the IPP isomerase type 1 family. Mg(2+) is required as a cofactor. The cofactor is Mn(2+).

Its subcellular location is the cytoplasm. The catalysed reaction is isopentenyl diphosphate = dimethylallyl diphosphate. It participates in isoprenoid biosynthesis; dimethylallyl diphosphate biosynthesis; dimethylallyl diphosphate from isopentenyl diphosphate: step 1/1. Functionally, catalyzes the 1,3-allylic rearrangement of the homoallylic substrate isopentenyl (IPP) to its highly electrophilic allylic isomer, dimethylallyl diphosphate (DMAPP). This Rhizobium rhizogenes (Agrobacterium rhizogenes) protein is Isopentenyl-diphosphate Delta-isomerase.